Consider the following 139-residue polypeptide: Large ribosomal subunit protein uL16 (139 aa).

It belongs to the universal ribosomal protein uL16 family. In terms of assembly, part of the 50S ribosomal subunit.

In terms of biological role, binds 23S rRNA and is also seen to make contacts with the A and possibly P site tRNAs. This is Large ribosomal subunit protein uL16 from Synechocystis sp. (strain ATCC 27184 / PCC 6803 / Kazusa).